A 140-amino-acid chain; its full sequence is Small ribosomal subunit protein eS17x (140 aa).

This sequence belongs to the eukaryotic ribosomal protein eS17 family.

The chain is Small ribosomal subunit protein eS17x (RPS17C) from Arabidopsis thaliana (Mouse-ear cress).